The chain runs to 424 residues: UPF0597 protein SO_1403 (424 aa).

It belongs to the UPF0597 family.

In Shewanella oneidensis (strain ATCC 700550 / JCM 31522 / CIP 106686 / LMG 19005 / NCIMB 14063 / MR-1), this protein is UPF0597 protein SO_1403.